Here is a 476-residue protein sequence, read N- to C-terminus: Probable pectin lyase F (476 aa).

Positions 1-20 (MTLLRHLLTATALLGASVQA) are cleaved as a signal peptide. Residues Cys84 and Cys108 are joined by a disulfide bond. 2 N-linked (GlcNAc...) asparagine glycosylation sites follow: Asn103 and Asn131. Residue Arg258 is part of the active site. N-linked (GlcNAc...) asparagine glycans are attached at residues Asn277 and Asn318. Cys325 and Cys333 form a disulfide bridge. N-linked (GlcNAc...) asparagine glycosylation is present at Asn385. The disordered stretch occupies residues 412 to 476 (FVPAYSEAGP…HHHQGHGRGY (65 aa)). Polar residues predominate over residues 426 to 453 (VPTQPSWSWRTVTNGPAPTGAPSDSPSA). The span at 465–476 (NKHHHQGHGRGY) shows a compositional bias: basic residues.

This sequence belongs to the polysaccharide lyase 1 family.

Its subcellular location is the secreted. It catalyses the reaction Eliminative cleavage of (1-&gt;4)-alpha-D-galacturonan methyl ester to give oligosaccharides with 4-deoxy-6-O-methyl-alpha-D-galact-4-enuronosyl groups at their non-reducing ends.. Its function is as follows. Pectinolytic enzymes consist of four classes of enzymes: pectin lyase, polygalacturonase, pectin methylesterase and rhamnogalacturonase. Among pectinolytic enzymes, pectin lyase is the most important in depolymerization of pectin, since it cleaves internal glycosidic bonds of highly methylated pectins. The protein is Probable pectin lyase F (pelF) of Aspergillus niger (strain ATCC MYA-4892 / CBS 513.88 / FGSC A1513).